Reading from the N-terminus, the 178-residue chain is Probable inosine/xanthosine triphosphatase (178 aa).

It belongs to the YjjX NTPase family. Homodimer. Mg(2+) is required as a cofactor. It depends on Mn(2+) as a cofactor.

The catalysed reaction is XTP + H2O = XDP + phosphate + H(+). It catalyses the reaction ITP + H2O = IDP + phosphate + H(+). Functionally, phosphatase that hydrolyzes non-canonical purine nucleotides such as XTP and ITP to their respective diphosphate derivatives. Probably excludes non-canonical purines from DNA/RNA precursor pool, thus preventing their incorporation into DNA/RNA and avoiding chromosomal lesions. This Pyrobaculum calidifontis (strain DSM 21063 / JCM 11548 / VA1) protein is Probable inosine/xanthosine triphosphatase.